A 354-amino-acid polypeptide reads, in one-letter code: Uroporphyrinogen decarboxylase (354 aa).

Substrate is bound by residues 27–31 (RQAGR), aspartate 77, tyrosine 154, serine 209, and histidine 327.

The protein belongs to the uroporphyrinogen decarboxylase family. Homodimer.

The protein resides in the cytoplasm. It carries out the reaction uroporphyrinogen III + 4 H(+) = coproporphyrinogen III + 4 CO2. It participates in porphyrin-containing compound metabolism; protoporphyrin-IX biosynthesis; coproporphyrinogen-III from 5-aminolevulinate: step 4/4. Catalyzes the decarboxylation of four acetate groups of uroporphyrinogen-III to yield coproporphyrinogen-III. The protein is Uroporphyrinogen decarboxylase of Pseudomonas savastanoi pv. phaseolicola (strain 1448A / Race 6) (Pseudomonas syringae pv. phaseolicola (strain 1448A / Race 6)).